A 131-amino-acid chain; its full sequence is Meiotically up-regulated gene 115 protein (131 aa).

It is found in the mitochondrion. The protein localises to the nucleus. Functionally, has a role in meiosis. The sequence is that of Meiotically up-regulated gene 115 protein (mug115) from Schizosaccharomyces pombe (strain 972 / ATCC 24843) (Fission yeast).